A 211-amino-acid chain; its full sequence is Uracil phosphoribosyltransferase (211 aa).

Residues R78, R103, and 130–138 (DPMLATGGT) each bind 5-phospho-alpha-D-ribose 1-diphosphate. Uracil-binding positions include I195 and 200–202 (GDA). Residue D201 participates in 5-phospho-alpha-D-ribose 1-diphosphate binding.

This sequence belongs to the UPRTase family. Requires Mg(2+) as cofactor.

It catalyses the reaction UMP + diphosphate = 5-phospho-alpha-D-ribose 1-diphosphate + uracil. It functions in the pathway pyrimidine metabolism; UMP biosynthesis via salvage pathway; UMP from uracil: step 1/1. With respect to regulation, allosterically activated by GTP. Catalyzes the conversion of uracil and 5-phospho-alpha-D-ribose 1-diphosphate (PRPP) to UMP and diphosphate. The protein is Uracil phosphoribosyltransferase of Pseudarthrobacter chlorophenolicus (strain ATCC 700700 / DSM 12829 / CIP 107037 / JCM 12360 / KCTC 9906 / NCIMB 13794 / A6) (Arthrobacter chlorophenolicus).